Consider the following 453-residue polypeptide: MSHSTFSHLFSPHFGAPVYSPVSSRIGGRYVSSSVPTRSVDFRSRSSAPAPRLSYDKVDFSSAEAINQEFFATRSNEKRELQELNDRFASFIEKVRHLEQQNSKLILELGQYKDQHQGSTGRINELCQQEMRELRRQLELMAKDRDQMQVERDNLAEDVALLNQRLNEEMGKRQEAENNLTLFRKDVDDATLARLELERKIESLMDEIEFLKKMHDEEIQDVQVSVQSQQMKMEVMETSSRPDLTGALRDIRAQYESIATKNMQESEEWYKSKFADLTDSAKRNAEAMRQGKQENNDLRRQIQAQNCDIDSLKRTNEALLRQMREMEEQFAAEARNYQDTVSRLEDEIRNLKEEMSRHLREYQDLLNVKMALDIEIATYRKLLEGEENRIVVPIMKMPSMSGYSGDYGQFSDTRAGQKVVIKTVETRDGEVVKESTKEKGRDEKKDSHGQGKD.

Positions M1–P51 are head. Residues F71–Y112 are coil 1A. One can recognise an IF rod domain in the interval E77–I390. The linker 1 stretch occupies residues K113–L126. A coil 1B region spans residues C127 to V222. Residues Q223–T245 are linker 12. Positions G246–V391 are coil 2. A tail region spans residues V392–D453. The disordered stretch occupies residues I421–D453. The span at V424–D453 shows a compositional bias: basic and acidic residues.

The protein belongs to the intermediate filament family. Optic nerve.

Type III neurofilament. This chain is Plasticin, found in Carassius auratus (Goldfish).